The sequence spans 311 residues: Aspartate carbamoyltransferase catalytic subunit (311 aa).

Carbamoyl phosphate contacts are provided by R59 and T60. An L-aspartate-binding site is contributed by K87. Carbamoyl phosphate contacts are provided by R109, H139, and Q142. R172 and R224 together coordinate L-aspartate. Residues A265 and P266 each contribute to the carbamoyl phosphate site.

This sequence belongs to the aspartate/ornithine carbamoyltransferase superfamily. ATCase family. Heterododecamer (2C3:3R2) of six catalytic PyrB chains organized as two trimers (C3), and six regulatory PyrI chains organized as three dimers (R2).

It carries out the reaction carbamoyl phosphate + L-aspartate = N-carbamoyl-L-aspartate + phosphate + H(+). Its pathway is pyrimidine metabolism; UMP biosynthesis via de novo pathway; (S)-dihydroorotate from bicarbonate: step 2/3. Catalyzes the condensation of carbamoyl phosphate and aspartate to form carbamoyl aspartate and inorganic phosphate, the committed step in the de novo pyrimidine nucleotide biosynthesis pathway. The protein is Aspartate carbamoyltransferase catalytic subunit of Streptococcus pyogenes serotype M1.